The chain runs to 229 residues: uncharacterized protein (229 aa).

7 helical membrane-spanning segments follow: residues 21 to 41 (IYSL…LMLY), 56 to 76 (MIYY…SGAA), 83 to 103 (ALPI…FIIV), 109 to 129 (TVFQ…IIGV), 141 to 161 (AMFA…FIGS), 162 to 182 (GMMS…LIAS), and 202 to 222 (WAVA…ISLL).

The protein belongs to the BI1 family.

Its subcellular location is the cell membrane. This is an uncharacterized protein from Streptococcus pyogenes serotype M3 (strain ATCC BAA-595 / MGAS315).